Consider the following 132-residue polypeptide: Agouti-signaling protein (132 aa).

The signal sequence occupies residues 1–22 (MDVTRLLLATLLVFLCFFTANS). N39 carries N-linked (GlcNAc...) asparagine glycosylation. Residues 61-87 (QIGRKEAEKKRSSKKEASMKKVARPRT) are disordered. The span at 63-79 (GRKEAEKKRSSKKEASM) shows a compositional bias: basic and acidic residues. Intrachain disulfides connect C93/C108, C100/C114, C107/C125, C111/C132, and C116/C123. Residues 93 to 132 (CVATRNSCKPPAPACCDPCASCQCRFFRSACSCRVLSLNC) enclose the Agouti domain.

It is found in the secreted. In terms of biological role, involved in the regulation of melanogenesis. The binding of ASP to MC1R precludes alpha-MSH initiated signaling and thus blocks production of cAMP, leading to a down-regulation of eumelanogenesis (brown/black pigment) and thus increasing synthesis of pheomelanin (yellow/red pigment). This chain is Agouti-signaling protein (ASIP), found in Gorilla gorilla gorilla (Western lowland gorilla).